The chain runs to 149 residues: SsrA-binding protein (149 aa).

Residues 121–149 (GKGEHDKRDTIKDREGKREVERAMKSRSR) are disordered.

The protein belongs to the SmpB family.

The protein localises to the cytoplasm. Its function is as follows. Required for rescue of stalled ribosomes mediated by trans-translation. Binds to transfer-messenger RNA (tmRNA), required for stable association of tmRNA with ribosomes. tmRNA and SmpB together mimic tRNA shape, replacing the anticodon stem-loop with SmpB. tmRNA is encoded by the ssrA gene; the 2 termini fold to resemble tRNA(Ala) and it encodes a 'tag peptide', a short internal open reading frame. During trans-translation Ala-aminoacylated tmRNA acts like a tRNA, entering the A-site of stalled ribosomes, displacing the stalled mRNA. The ribosome then switches to translate the ORF on the tmRNA; the nascent peptide is terminated with the 'tag peptide' encoded by the tmRNA and targeted for degradation. The ribosome is freed to recommence translation, which seems to be the essential function of trans-translation. The protein is SsrA-binding protein of Polaromonas sp. (strain JS666 / ATCC BAA-500).